A 296-amino-acid chain; its full sequence is tRNA (guanine(9)-N1)-methyltransferase (296 aa).

The segment at 1–33 is disordered; it reads MTPETNNDETLSRPKPRAALPPVPEGMSKSQWK. Residues 85 to 274 enclose the SAM-dependent MTase TRM10-type domain; that stretch reads TPRVNVNQKD…SVLPARKLAE (190 aa). Residues 181-182, Gly201, 205-209, Cys213, Leu227, and 239-241 each bind S-adenosyl-L-methionine; these read LT, DKNRH, and KVL. Asp205 acts as the Proton acceptor in catalysis. Residues 277–296 are disordered; the sequence is DHAQESNSSSPAEEQDAQDI.

This sequence belongs to the class IV-like SAM-binding methyltransferase superfamily. TRM10 family. Monomer.

Its subcellular location is the cytoplasm. The protein localises to the nucleus. The enzyme catalyses guanosine(9) in tRNA + S-adenosyl-L-methionine = N(1)-methylguanosine(9) in tRNA + S-adenosyl-L-homocysteine + H(+). In terms of biological role, S-adenosyl-L-methionine-dependent guanine N(1)-methyltransferase that catalyzes the formation of N(1)-methylguanine at position 9 (m1G9) in cytoplasmic tRNA. This is tRNA (guanine(9)-N1)-methyltransferase from Eremothecium gossypii (strain ATCC 10895 / CBS 109.51 / FGSC 9923 / NRRL Y-1056) (Yeast).